A 362-amino-acid chain; its full sequence is Glutaminase-asparaginase (362 aa).

The N-terminal stretch at 1 to 25 (MKPLLHAFAPGVMALMLLLPQAAQA) is a signal peptide. An Asparaginase/glutaminase domain is found at 35–362 (SNVVILATGG…KELQRIFWEY (328 aa)). T45 serves as the catalytic Acyl-ester intermediate. Residues S92 and 125-126 (TD) each bind substrate.

It belongs to the asparaginase 1 family. In terms of assembly, homotetramer.

It is found in the periplasm. The enzyme catalyses L-glutamine + H2O = L-glutamate + NH4(+). It catalyses the reaction L-asparagine + H2O = L-aspartate + NH4(+). The protein is Glutaminase-asparaginase (ansB) of Pseudomonas aeruginosa (strain ATCC 15692 / DSM 22644 / CIP 104116 / JCM 14847 / LMG 12228 / 1C / PRS 101 / PAO1).